A 324-amino-acid polypeptide reads, in one-letter code: Glyoxylate/hydroxypyruvate reductase B (324 aa).

Catalysis depends on residues Arg237 and Glu266. The active-site Proton donor is the His285.

Belongs to the D-isomer specific 2-hydroxyacid dehydrogenase family. GhrB subfamily. Homodimer.

The protein localises to the cytoplasm. It carries out the reaction glycolate + NADP(+) = glyoxylate + NADPH + H(+). The catalysed reaction is (R)-glycerate + NAD(+) = 3-hydroxypyruvate + NADH + H(+). The enzyme catalyses (R)-glycerate + NADP(+) = 3-hydroxypyruvate + NADPH + H(+). In terms of biological role, catalyzes the NADPH-dependent reduction of glyoxylate and hydroxypyruvate into glycolate and glycerate, respectively. This Escherichia coli O17:K52:H18 (strain UMN026 / ExPEC) protein is Glyoxylate/hydroxypyruvate reductase B.